We begin with the raw amino-acid sequence, 143 residues long: MKNNSAQKIIDSIKQILSIYKIDFDPSFGAVLTDDNDLDYQMLIEKTQEKIQELDKRSQEILQQTGMTREQMEVFANNPDNFSPEEWRALETIRSSCNEYKKETEELIKEVTQDISHTSGKSPTPKAKSSSPKKSKKKNWIPL.

Residues 111-143 (VTQDISHTSGKSPTPKAKSSSPKKSKKKNWIPL) are disordered. Residues 119–130 (SGKSPTPKAKSS) are compositionally biased toward low complexity. A compositionally biased stretch (basic residues) spans 131–143 (SPKKSKKKNWIPL).

The protein belongs to the chlamydial CPn_0742/CT_635/TC_0003 family.

This is an uncharacterized protein from Chlamydia muridarum (strain MoPn / Nigg).